The following is a 289-amino-acid chain: mRNA-capping enzyme small subunit (289 aa).

In terms of assembly, heterodimer of a large and a small subunit.

The protein resides in the virion. It catalyses the reaction a 5'-end (5'-triphosphoguanosine)-ribonucleoside in mRNA + S-adenosyl-L-methionine = a 5'-end (N(7)-methyl 5'-triphosphoguanosine)-ribonucleoside in mRNA + S-adenosyl-L-homocysteine. In terms of biological role, catalyzes the last reaction in the mRNA cap formation pathway. The protein is mRNA-capping enzyme small subunit of Fowlpox virus (strain NVSL) (FPV).